Here is an 89-residue protein sequence, read N- to C-terminus: Cell division topological specificity factor (89 aa).

Belongs to the MinE family.

In terms of biological role, prevents the cell division inhibition by proteins MinC and MinD at internal division sites while permitting inhibition at polar sites. This ensures cell division at the proper site by restricting the formation of a division septum at the midpoint of the long axis of the cell. This chain is Cell division topological specificity factor, found in Proteus mirabilis (strain HI4320).